An 813-amino-acid polypeptide reads, in one-letter code: Glycerol-3-phosphate acyltransferase (813 aa).

Positions 304-309 match the HXXXXD motif motif; the sequence is CHRSHI.

Belongs to the GPAT/DAPAT family.

The protein localises to the cell inner membrane. The catalysed reaction is sn-glycerol 3-phosphate + an acyl-CoA = a 1-acyl-sn-glycero-3-phosphate + CoA. The protein operates within phospholipid metabolism; CDP-diacylglycerol biosynthesis; CDP-diacylglycerol from sn-glycerol 3-phosphate: step 1/3. The protein is Glycerol-3-phosphate acyltransferase of Actinobacillus succinogenes (strain ATCC 55618 / DSM 22257 / CCUG 43843 / 130Z).